The primary structure comprises 390 residues: MFDFSKVVDRHGTWCTQWDYVADRFGTADLLPFTISDMDFATAPCIIEALNQRLMHGVFGYSRWKNDEFLAAIAHWFSTQHYTAIDSQTVVYGPSVIYMVSELIRQWSETGEGVVIHTPAYDAFYKAIEGNQRTVMPVALEKQADGWFCDMGKLEAVLAKPECKIMLLCSPQNPTGKVWTCDELEIMADLCERHGVRVISDEIHMDMVWGEQPHIPWSNVARGDWALLTSGSKSFNIPALTGAYGIIENSSSRDAYLSALKGRDGLSSPSVLALTAHIAAYQQGAPWLDALRIYLKDNLTYIADKMNAAFPELNWQIPQSTYLAWLDLRPLNIDDNALQKALIEQEKVAIMPGYTYGEEGRGFVRLNAGCPRSKLEKGVAGLINAIRAVR.

At lysine 233 the chain carries N6-(pyridoxal phosphate)lysine.

It belongs to the class-II pyridoxal-phosphate-dependent aminotransferase family. MalY/PatB cystathionine beta-lyase subfamily. In terms of assembly, homodimer. Interacts with MalT. Requires pyridoxal 5'-phosphate as cofactor.

The enzyme catalyses L,L-cystathionine + H2O = L-homocysteine + pyruvate + NH4(+). The catalysed reaction is an S-substituted L-cysteine + H2O = a thiol + pyruvate + NH4(+). Acts as a beta-cystathionase and as a repressor of the maltose regulon. This chain is Protein MalY (malY), found in Escherichia coli (strain K12).